The primary structure comprises 551 residues: Seventh homolog of septin 1 (551 aa).

Ser2 carries the N-acetylserine modification. A Septin-type G domain is found at 20 to 339 (RGITYTMLLC…ENYRSEKLSS (320 aa)). Residues 30-37 (GPAGTGKT) are G1 motif. GTP contacts are provided by residues 30–37 (GPAGTGKT), Gly138, 218–226 (RADSFTKEE), and Arg288. The G3 motif stretch occupies residues 135–138 (MTHG). Residues 217 to 220 (TRAD) form a G4 motif region. Residues 381-417 (NLRADTPRNQVSGNFKENEYEDNGEHDSAENEQEMSP) form a disordered region. A Phosphotyrosine modification is found at Tyr400. Ser408 and Ser416 each carry phosphoserine. The stretch at 418-518 (VRQLGREIKQ…KLINQNKLNG (101 aa)) forms a coiled coil. Glycyl lysine isopeptide (Lys-Gly) (interchain with G-Cter in SUMO) cross-links involve residues Lys426 and Lys437. 6 positions are modified to phosphoserine: Ser447, Ser460, Ser519, Ser520, Ser522, and Ser525. The disordered stretch occupies residues 515-551 (KLNGSSSSINSLQQSTRSQIKKNDTYTDLASIASGRD). Residues 519 to 532 (SSSSINSLQQSTRS) are compositionally biased toward low complexity. Phosphothreonine is present on Thr539. A phosphoserine mark is found at Ser545 and Ser548.

The protein belongs to the TRAFAC class TrmE-Era-EngA-EngB-Septin-like GTPase superfamily. Septin GTPase family. In terms of assembly, component of the septin complex which consists of CDC3, CDC10, CDC11, CDC12 and probably SHS1 and rearranges to a cortical collar of highly ordered filaments at the mother-bud-neck. A complex formed by CDC3, CDC10, CDC11 and CDC12 is capable of forming long filaments in vitro and the components seem to be present in a 2:2:2:2 arrangement in vivo. The filaments are proposed to be formed by the end-to-end polymerization of CDC3-CDC12-CDC11 complexes with CDC10 serving as a bridge to bundle the polymers into paired filaments. Component of the GIN4 complex composed of at least BNI5, CDC3, CDC10, CDC11, CDC12, GIN4, NAP1 and SHS1. Self-associates. Interacts with CDC11 and SPA2. In terms of processing, phosphorylated by GIN4 and CLA4. Phosphorylation state is essential for septin ring dynamics during telophase. Sumoylated during mitosis on the mother cell side of the bud neck. Sumoylation probably plays a central role in regulating septin ring disassembly during the cell cycle.

The protein resides in the membrane. It localises to the bud neck. Its function is as follows. Septins are GTPases involved in cytokinesis that assemble early in the cell cycle as a patch at the incipient bud site and form a ring approximately 15 minutes before bud emergence, which transforms into an hour-glass shaped collar of cortical filaments that spans both sides of the mother-bud neck. This collar persists until just before cytokinesis, when it splits into two rings that occupy opposite sides of the neck. The septins at the bud neck serve as a structural scaffold that recruits different components involved in diverse processes at specific stages during the cell cycle. Many proteins bind asymmetrically to the septin collar. The septin assembly is regulated by protein kinases GIN4 and/or CLA4. May act by recruiting MYO1 and HOF1, a protein involved in septation, to the site of cleavage. Septins are also involved in cell morphogenesis, bud site selection, chitin deposition, cell cycle regulation, cell compartmentalization and spore wall formation. CDCd11 with SHS1 11 are involved in the recruitment of BNI5 and thereby ensure efficient localization at the bud neck of MYO1, the type II myosin of the actomyosin contractile ring. This is Seventh homolog of septin 1 from Saccharomyces cerevisiae (strain ATCC 204508 / S288c) (Baker's yeast).